The primary structure comprises 469 residues: 3-isopropylmalate dehydratase large subunit (469 aa).

Positions 347, 410, and 413 each coordinate [4Fe-4S] cluster.

The protein belongs to the aconitase/IPM isomerase family. LeuC type 1 subfamily. Heterodimer of LeuC and LeuD. [4Fe-4S] cluster is required as a cofactor.

It carries out the reaction (2R,3S)-3-isopropylmalate = (2S)-2-isopropylmalate. It participates in amino-acid biosynthesis; L-leucine biosynthesis; L-leucine from 3-methyl-2-oxobutanoate: step 2/4. Catalyzes the isomerization between 2-isopropylmalate and 3-isopropylmalate, via the formation of 2-isopropylmaleate. This is 3-isopropylmalate dehydratase large subunit from Burkholderia vietnamiensis (strain G4 / LMG 22486) (Burkholderia cepacia (strain R1808)).